The following is a 1380-amino-acid chain: Carboxypeptidase D (1380 aa).

An N-terminal signal peptide occupies residues 1-31; sequence MASGRDERPPWRLGRLLLLMCLLLLGSSARA. Residues 32-1299 are Extracellular-facing; it reads AHIKKAEATT…DNRIFGLPRE (1268 aa). The 324-residue stretch at 57–380 folds into the Peptidase M14 1 domain; it reads RYYHEEELES…ESLITLIEKV (324 aa). The Zn(2+) site is built by His-139 and Glu-142. The short motif at 162–164 is the Cell attachment site element; sequence RGD. The N-linked (GlcNAc...) asparagine glycan is linked to Asn-172. Positions 190 to 232 are disordered; that stretch reads AREGDCGFGDGGPSGASGRDNSRGRDLNRSFPDQFSTGEPPAL. The span at 195 to 204 shows a compositional bias: gly residues; that stretch reads CGFGDGGPSG. Asn-217 carries an N-linked (GlcNAc...) asparagine glycan. Residue His-257 participates in Zn(2+) binding. Residue Tyr-265 is modified to Phosphotyrosine. Position 270 is a phosphoserine (Ser-270). Glu-350 acts as the Proton donor/acceptor in catalysis. Asn-399, Asn-410, Asn-429, and Asn-522 each carry an N-linked (GlcNAc...) asparagine glycan. A Peptidase M14 2 domain is found at 502–792; sequence HHHHFPDMEI…RSLIQFMKQV (291 aa). The Zn(2+) site is built by His-564 and Glu-567. A glycan (N-linked (GlcNAc...) asparagine) is linked at Asn-626. His-671 lines the Zn(2+) pocket. Glu-762 serves as the catalytic Proton donor/acceptor. N-linked (GlcNAc...) asparagine glycans are attached at residues Asn-811, Asn-855, Asn-867, and Asn-879. The tract at residues 874–899 is disordered; it reads STDSNNESKKGKGASSSTNDASDPTT. Residues 887-897 are compositionally biased toward polar residues; it reads ASSSTNDASDP. The Peptidase M14 3 domain occupies 932-1211; that stretch reads RYHSYKDLSE…RSLLSMLVEV (280 aa). 4 N-linked (GlcNAc...) asparagine glycosylation sites follow: Asn-955, Asn-978, Asn-1070, and Asn-1142. Residues 1300–1320 traverse the membrane as a helical segment; it reads LVVTVSGATMSALILTACIIW. 3 S-palmitoyl cysteine lipidation sites follow: Cys-1317, Cys-1321, and Cys-1323. At 1321–1380 the chain is on the cytoplasmic side; that stretch reads CICSIKSNRHKDGFHRLRQHHDEYEDEIRMMSTGSKKSLLSHEFQDETDTEEETLYSSKH. Residues Ser-1358 and Ser-1361 each carry the phosphoserine modification. Residues 1359–1380 form a disordered region; the sequence is LLSHEFQDETDTEEETLYSSKH. Phosphothreonine is present on residues Thr-1368 and Thr-1370.

Belongs to the peptidase M14 family. Requires Zn(2+) as cofactor. Highly expressed in placenta, pancreas and hepatoma cells. Lower levels found in skeletal muscle, heart and colon carcinoma and melanoma cell lines.

It is found in the cell membrane. It carries out the reaction Releases C-terminal Arg and Lys from polypeptides.. This chain is Carboxypeptidase D (CPD), found in Homo sapiens (Human).